The chain runs to 981 residues: Rab3 GTPase-activating protein catalytic subunit (981 aa).

Residues Ser83, Ser379, Ser536, Ser579, Ser581, and Ser590 each carry the phosphoserine modification. The segment at 532-558 (GKKTSLSDSTTSAYPGDAGKTGGQLGL) is disordered. The disordered stretch occupies residues 591 to 614 (DTEDLKGNGQESGKKGGPKEMANL). Ser664 is subject to Phosphoserine.

Belongs to the Rab3-GAP catalytic subunit family. As to quaternary structure, the Rab3 GTPase-activating complex is a heterodimer composed of Rab3gap1 and Rab3gap2. The Rab3 GTPase-activating complex interacts with DMXL2. Interacts with LMAN1. In terms of tissue distribution, in the eye, it is highly expressed within the lens, particularly in the anterior lens epithelium and in a ring corresponding to the equatorial region where anterior cells are differentiating into lens fibers. Also highly expressed in the retina.

The protein resides in the cytoplasm. Its subcellular location is the endoplasmic reticulum. It localises to the golgi apparatus. The protein localises to the cis-Golgi network. Its function is as follows. Catalytic subunit of the Rab3 GTPase-activating (Rab3GAP) complex composed of RAB3GAP1 and RAB3GAP2, which has GTPase-activating protein (GAP) activity towards various Rab3 subfamily members (RAB3A, RAB3B, RAB3C and RAB3D), RAB5A and RAB43, and guanine nucleotide exchange factor (GEF) activity towards RAB18. As part of the Rab3GAP complex, acts as a GAP for Rab3 proteins by converting active RAB3-GTP to the inactive form RAB3-GDP. Rab3 proteins are involved in regulated exocytosis of neurotransmitters and hormones. The Rab3GAP complex, acts as a GEF for RAB18 by promoting the conversion of inactive RAB18-GDP to the active form RAB18-GTP. Recruits and stabilizes RAB18 at the cis-Golgi membrane where RAB18 is most likely activated. Also involved in RAB18 recruitment at the endoplasmic reticulum (ER) membrane where it maintains proper ER structure. Required for normal eye and brain development. May participate in neurodevelopmental processes such as proliferation, migration and differentiation before synapse formation, and non-synaptic vesicular release of neurotransmitters. This Mus musculus (Mouse) protein is Rab3 GTPase-activating protein catalytic subunit.